A 194-amino-acid polypeptide reads, in one-letter code: FMN-dependent NADH:quinone oxidoreductase (194 aa).

Residues serine 10 and 90-93 (MYNL) each bind FMN.

Belongs to the azoreductase type 1 family. Homodimer. The cofactor is FMN.

It carries out the reaction 2 a quinone + NADH + H(+) = 2 a 1,4-benzosemiquinone + NAD(+). It catalyses the reaction N,N-dimethyl-1,4-phenylenediamine + anthranilate + 2 NAD(+) = 2-(4-dimethylaminophenyl)diazenylbenzoate + 2 NADH + 2 H(+). In terms of biological role, quinone reductase that provides resistance to thiol-specific stress caused by electrophilic quinones. Also exhibits azoreductase activity. Catalyzes the reductive cleavage of the azo bond in aromatic azo compounds to the corresponding amines. The chain is FMN-dependent NADH:quinone oxidoreductase from Haemophilus influenzae (strain 86-028NP).